The chain runs to 166 residues: PTS system glucose-specific EIIA component (166 aa).

A PTS EIIA type-1 domain is found at 34–138 (DPVFAQKMMG…SVISPIIITN (105 aa)). Zn(2+) is bound by residues H71 and H86. H86 acts as the Tele-phosphohistidine intermediate; for EIIA activity in catalysis. A Phosphohistidine; by HPr modification is found at H86.

In terms of assembly, heterodimer with glycerol kinase (glpk). Zn(2+) is required as a cofactor.

Its subcellular location is the cytoplasm. The phosphoenolpyruvate-dependent sugar phosphotransferase system (sugar PTS), a major carbohydrate active transport system, catalyzes the phosphorylation of incoming sugar substrates concomitantly with their translocation across the cell membrane. The enzyme II complex composed of PtsG and Crr is involved in glucose transport. The sequence is that of PTS system glucose-specific EIIA component (crr) from Staphylococcus aureus (strain COL).